A 1312-amino-acid polypeptide reads, in one-letter code: Angiotensin-converting enzyme (1312 aa).

A signal peptide spans 1–34 (MGAASGQRGRWPLSPPLLMLSLLVLLLQPSPAPA). Over 35–1264 (LDPGLQPGNF…LEPQQARVGQ (1230 aa)) the chain is Extracellular. Peptidase M2 domains are found at residues 45-629 (SPDE…LGWP) and 648-1227 (ETDE…LGWP). N-linked (GlcNAc...) asparagine glycosylation is found at Asn59, Asn79, Asn116, Asn151, and Asn165. Residues Cys162 and Cys170 are joined by a disulfide bond. Residue Tyr236 coordinates chloride. Residue Asn323 is glycosylated (N-linked (GlcNAc...) asparagine). The cysteines at positions 364 and 382 are disulfide-linked. His395 is a binding site for Zn(2+). Catalysis depends on Glu396, which acts as the Proton acceptor 1. Zn(2+) is bound by residues His399 and Glu423. N-linked (GlcNAc...) asparagine glycosylation occurs at Asn514. Catalysis depends on His525, which acts as the Proton donor 1. Arg534 contacts chloride. An intrachain disulfide couples Cys550 to Cys562. The N-linked (GlcNAc...) asparagine glycan is linked to Asn682. N-linked (GlcNAc...) (complex) asparagine glycosylation is found at Asn700 and Asn719. A disulfide bridge links Cys762 with Cys768. An N-linked (GlcNAc...) asparagine glycan is attached at Asn765. Residues Arg796 and Tyr834 each coordinate chloride. An N-linked (GlcNAc...) asparagine glycan is attached at Asn947. Cys962 and Cys980 are oxidised to a cystine. His993 is a Zn(2+) binding site. The active-site Proton acceptor 2 is Glu994. 2 residues coordinate Zn(2+): His997 and Glu1021. Chloride contacts are provided by Trp1095 and Arg1099. Catalysis depends on His1123, which acts as the Proton donor 2. A chloride-binding site is contributed by Arg1132. A disulfide bridge connects residues Cys1148 and Cys1160. Asn1196 is a glycosylation site (N-linked (GlcNAc...) asparagine). The segment at 1220 to 1261 (HGETLGWPEYNWAPNTARAEGSTAESNRVNFLGLYLEPQQAR) is juxtamembrane stalk. Residues 1265 to 1281 (WVLLFLGVALLVATVGL) traverse the membrane as a helical segment. Over 1282–1312 (AHRLYNIRNHHSLRRPHRGPQFGSEVELRHS) the chain is Cytoplasmic. Ser1305 is subject to Phosphoserine.

The protein belongs to the peptidase M2 family. In terms of assembly, monomer and homodimer; homodimerizes following binding to an inhibitor. Interacts with calmodulin (CALM1, CALM2 or CALM3); interaction takes place in the cytoplasmic region and regulates phosphorylation and proteolytic cleavage. It depends on Zn(2+) as a cofactor. The cofactor is chloride. Post-translationally, produced following proteolytic cleavage by secretase enzymes that cleave the transmembrane form in the juxtamembrane stalk region upstream of the transmembrane region. Cleavage can take place at different sites of the juxtamembrane stalk region. Phosphorylated by CK2 on Ser-1305; which allows membrane retention. Phosphorylated on tyrosine residues on its extracellular part, promoting cleavage by secretase enzymes and formation of the soluble form (Angiotensin-converting enzyme, soluble form). In terms of tissue distribution, highly expressed in kidney and lung; not expressed in the liver. In the brain, expressed in the cerebral cortex, hippocampus, cerebellum and basal ganglia/brainstem. Highly expressed in dopamine receptor DRD1-expressing neurons in the dorsal striatum and the nucleus accumbens of the brain. As to expression, specifically expressed in spermatocytes, adult testis.

It is found in the cell membrane. The protein resides in the cytoplasm. Its subcellular location is the secreted. It catalyses the reaction Release of a C-terminal dipeptide, oligopeptide-|-Xaa-Yaa, when Xaa is not Pro, and Yaa is neither Asp nor Glu. Thus, conversion of angiotensin I to angiotensin II, with increase in vasoconstrictor activity, but no action on angiotensin II.. The enzyme catalyses angiotensin I + H2O = L-histidyl-L-leucine + angiotensin II. It carries out the reaction bradykinin + H2O = L-Phe-L-Arg + bradykinin(1-7). The catalysed reaction is substance P + H2O = substance P(1-9) + L-Leu-L-Met-NH2. It catalyses the reaction substance P + H2O = substance P(1-8) + Gly-L-Leu-L-Met-NH2. The enzyme catalyses substance P + H2O = L-Phe-L-Phe-Gly-L-Leu-L-Met-NH2 + substance P(1-6). It carries out the reaction neurotensin + H2O = neurotensin(1-11) + L-isoleucyl-L-leucine. The catalysed reaction is goralatide + H2O = N-acetyl-L-seryl-L-aspartate + L-lysyl-L-proline. It catalyses the reaction Met-enkephalin + H2O = L-phenylalanyl-L-methionine + L-tyrosylglycylglycine. The enzyme catalyses Leu-enkephalin + H2O = L-tyrosylglycylglycine + L-phenylalanyl-L-leucine. It carries out the reaction Met-enkephalin-Arg-Phe + H2O = L-arginyl-L-phenylalanine + Met-enkephalin. Its activity is regulated as follows. The dipeptidyl carboxypeptidase activity is specifically inhibited by lisinopril, captopril and enalaprilat. The N-terminal catalytic domain, but not the C-terminal catalytic domain, is specifically inhibited by the phosphinic peptide RXP 407. The putative GPIase activity is nearly insensitive to captopril. Dipeptidyl carboxypeptidase that removes dipeptides from the C-terminus of a variety of circulating hormones, such as angiotensin I, bradykinin or enkephalins, thereby playing a key role in the regulation of blood pressure, electrolyte homeostasis or synaptic plasticity. Composed of two similar catalytic domains, each possessing a functional active site, with different selectivity for substrates. Plays a major role in the angiotensin-renin system that regulates blood pressure and sodium retention by the kidney by converting angiotensin I to angiotensin II, resulting in an increase of the vasoconstrictor activity of angiotensin. Also able to inactivate bradykinin, a potent vasodilator, and therefore enhance the blood pressure response. Acts as a regulator of synaptic transmission by mediating cleavage of neuropeptide hormones, such as substance P, neurotensin or enkephalins. Catalyzes degradation of different enkephalin neuropeptides (Met-enkephalin, Leu-enkephalin, Met-enkephalin-Arg-Phe and possibly Met-enkephalin-Arg-Gly-Leu). Acts as a regulator of synaptic plasticity in the nucleus accumbens of the brain by mediating cleavage of Met-enkephalin-Arg-Phe, a strong ligand of Mu-type opioid receptor OPRM1, into Met-enkephalin. Met-enkephalin-Arg-Phe cleavage by ACE decreases activation of OPRM1, leading to long-term synaptic potentiation of glutamate release. Also acts as a regulator of hematopoietic stem cell differentiation by mediating degradation of hemoregulatory peptide N-acetyl-SDKP (AcSDKP). Acts as a regulator of cannabinoid signaling pathway by mediating degradation of hemopressin, an antagonist peptide of the cannabinoid receptor CNR1. Involved in amyloid-beta metabolism by catalyzing degradation of Amyloid-beta protein 40 and Amyloid-beta protein 42 peptides, thereby preventing plaque formation. Catalyzes cleavage of cholecystokinin (maturation of Cholecystokinin-8 and Cholecystokinin-5) and Gonadoliberin-1 (both maturation and degradation) hormones. Degradation of hemoregulatory peptide N-acetyl-SDKP (AcSDKP) and amyloid-beta proteins is mediated by the N-terminal catalytic domain, while angiotensin I and cholecystokinin cleavage is mediated by the C-terminal catalytic region. Its function is as follows. Soluble form that is released in blood plasma and other body fluids following proteolytic cleavage in the juxtamembrane stalk region. In terms of biological role, isoform produced by alternative promoter usage that is specifically expressed in spermatocytes and adult testis, and which is required for male fertility. In contrast to somatic isoforms, only contains one catalytic domain. Acts as a dipeptidyl carboxypeptidase that removes dipeptides from the C-terminus of substrates. The identity of substrates that are needed for male fertility is unknown. Isoform Testis-specific and isoform Somatic have distinct activities and cannot completely compensate for the loss of the other when expressed in somatic tissues or testis. May also have a glycosidase activity which releases GPI-anchored proteins from the membrane by cleaving the mannose linkage in the GPI moiety. The GPIase activity was reported to be essential for the egg-binding ability of the sperm. This activity is however unclear and has been challenged by other groups, suggesting that it may be indirect. This chain is Angiotensin-converting enzyme, found in Mus musculus (Mouse).